The chain runs to 30 residues: 136 kDa hydroxyproline-rich cell wall glycoprotein, major component (30 aa).

Pro-8, Pro-9, Pro-10, Pro-11, Pro-12, Pro-17, Pro-18, Pro-19, Pro-20, Pro-26, Pro-27, Pro-28, and Pro-29 each carry 4-hydroxyproline.

O-glycosylated.

It localises to the secreted. The protein resides in the cell wall. The chain is 136 kDa hydroxyproline-rich cell wall glycoprotein, major component from Phaseolus vulgaris (Kidney bean).